A 1083-amino-acid polypeptide reads, in one-letter code: Error-prone DNA polymerase (1083 aa).

The protein belongs to the DNA polymerase type-C family. DnaE2 subfamily.

It is found in the cytoplasm. It carries out the reaction DNA(n) + a 2'-deoxyribonucleoside 5'-triphosphate = DNA(n+1) + diphosphate. Its function is as follows. DNA polymerase involved in damage-induced mutagenesis and translesion synthesis (TLS). It is not the major replicative DNA polymerase. This Xanthomonas axonopodis pv. citri (strain 306) protein is Error-prone DNA polymerase.